The following is a 207-amino-acid chain: Sodium/potassium-transporting ATPase subunit beta-1-interacting protein 1 (207 aa).

Transmembrane regions (helical) follow at residues 2 to 22 (GRCS…AAAL), 35 to 55 (APIL…LGTL), and 62 to 82 (LILY…IICF). N100 carries an N-linked (GlcNAc...) asparagine glycan. The helical transmembrane segment at 147–167 (ALSSALQIFLALFGFVYACYV) threads the bilayer.

Belongs to the NKAIN family. As to quaternary structure, interacts with atp1b1 C-terminus.

The protein localises to the cell membrane. The sequence is that of Sodium/potassium-transporting ATPase subunit beta-1-interacting protein 1 (nkain1) from Xenopus laevis (African clawed frog).